The chain runs to 237 residues: Protein CUSTOS (237 aa).

3 disordered regions span residues 1 to 23 (MAAP…LDRF), 50 to 69 (LRVR…TTPE), and 97 to 237 (ISKA…LGNE). A compositionally biased stretch (basic and acidic residues) spans 52-62 (VRPDCHEHDGN). Polar residues predominate over residues 162-177 (STLQQEPQSTPSNVCD). Basic residues predominate over residues 181–190 (PKKKRKKKKK). The Nucleolar localization signal (NLS1) signature appears at 182–190 (KKKRKKKKK). Composition is skewed to basic and acidic residues over residues 203–216 (ETMH…ELQA) and 225–237 (KLEM…LGNE). The Nucleolar localization signal (NLS2) signature appears at 217 to 225 (KRKKKKKQK).

This sequence belongs to the CUSTOS family. In terms of assembly, interacts (via NLS1 and NLS2) with dvl2; the interaction is negatively regulated by Wnt stimulation. Interacts with csnk1a1. Interacts with ctnnb1; the interaction is positively regulated by Wnt stimulation. In terms of processing, phosphorylated by ck1/csnk1a1.

Its subcellular location is the nucleus envelope. Its function is as follows. Essential for Spemann-Mangold organizer formation and subsequent anterior head development in the embryo. Inhibits canonical Wnt signaling pathway by antagonizing nuclear import of beta-catenin (ctnnb1) during embryogenesis. This is Protein CUSTOS from Xenopus laevis (African clawed frog).